An 888-amino-acid polypeptide reads, in one-letter code: Alanine--tRNA ligase (888 aa).

Zn(2+) is bound by residues H570, H574, C673, and H677.

This sequence belongs to the class-II aminoacyl-tRNA synthetase family. Zn(2+) is required as a cofactor.

It localises to the cytoplasm. The enzyme catalyses tRNA(Ala) + L-alanine + ATP = L-alanyl-tRNA(Ala) + AMP + diphosphate. Functionally, catalyzes the attachment of alanine to tRNA(Ala) in a two-step reaction: alanine is first activated by ATP to form Ala-AMP and then transferred to the acceptor end of tRNA(Ala). Also edits incorrectly charged Ser-tRNA(Ala) and Gly-tRNA(Ala) via its editing domain. This is Alanine--tRNA ligase from Chlorobium phaeobacteroides (strain DSM 266 / SMG 266 / 2430).